A 457-amino-acid polypeptide reads, in one-letter code: UDP-glycosyltransferase 74C1 (457 aa).

Residues Thr281, 336–338 (VPQ), 353–361 (HCGWNSTLE), and 375–378 (WTDQ) contribute to the UDP-alpha-D-glucose site.

It belongs to the UDP-glycosyltransferase family.

This chain is UDP-glycosyltransferase 74C1 (UGT74C1), found in Arabidopsis thaliana (Mouse-ear cress).